Consider the following 131-residue polypeptide: Aspartate 1-decarboxylase (131 aa).

The active-site Schiff-base intermediate with substrate; via pyruvic acid is the S25. Position 25 is a pyruvic acid (Ser) (S25). Position 57 (T57) interacts with substrate. Y58 serves as the catalytic Proton donor. Position 73 to 75 (73 to 75) interacts with substrate; the sequence is GAA.

This sequence belongs to the PanD family. As to quaternary structure, heterooctamer of four alpha and four beta subunits. Requires pyruvate as cofactor. In terms of processing, is synthesized initially as an inactive proenzyme, which is activated by self-cleavage at a specific serine bond to produce a beta-subunit with a hydroxyl group at its C-terminus and an alpha-subunit with a pyruvoyl group at its N-terminus.

The protein resides in the cytoplasm. It catalyses the reaction L-aspartate + H(+) = beta-alanine + CO2. The protein operates within cofactor biosynthesis; (R)-pantothenate biosynthesis; beta-alanine from L-aspartate: step 1/1. Functionally, catalyzes the pyruvoyl-dependent decarboxylation of aspartate to produce beta-alanine. This is Aspartate 1-decarboxylase from Chlorobium phaeobacteroides (strain DSM 266 / SMG 266 / 2430).